The following is an 847-amino-acid chain: Nitrite reductase (NADH) large subunit (847 aa).

An FAD-binding site is contributed by 44–79 (YDRVHLSSYFSHHTAEELSLVREGFYEKHGIKVLVG). An NAD(+)-binding site is contributed by 193–225 (LRRKIESMGVRVHTSKNTLEIVQEGVEARKTMR). Positions 425, 427, 459, and 462 each coordinate [2Fe-2S] cluster. 4 residues coordinate [4Fe-4S] cluster: cysteine 641, cysteine 647, cysteine 681, and cysteine 685. A siroheme-binding site is contributed by cysteine 685.

The protein belongs to the nitrite and sulfite reductase 4Fe-4S domain family. As to quaternary structure, homodimer which associates with NirD. Siroheme serves as cofactor. It depends on [2Fe-2S] cluster as a cofactor. [4Fe-4S] cluster is required as a cofactor. The cofactor is FAD.

The catalysed reaction is NH4(+) + 3 NAD(+) + 2 H2O = nitrite + 3 NADH + 5 H(+). The protein operates within nitrogen metabolism; nitrate reduction (assimilation). This chain is Nitrite reductase (NADH) large subunit (nirB), found in Escherichia coli (strain K12).